The following is a 227-amino-acid chain: Orotidine 5'-phosphate decarboxylase (227 aa).

Substrate is bound by residues aspartate 8, lysine 30, 59 to 68 (DLKLYDIPNT), threonine 118, arginine 178, glutamine 187, glycine 207, and arginine 208. Lysine 61 functions as the Proton donor in the catalytic mechanism.

This sequence belongs to the OMP decarboxylase family. Type 1 subfamily. As to quaternary structure, homodimer.

The enzyme catalyses orotidine 5'-phosphate + H(+) = UMP + CO2. It functions in the pathway pyrimidine metabolism; UMP biosynthesis via de novo pathway; UMP from orotate: step 2/2. Functionally, catalyzes the decarboxylation of orotidine 5'-monophosphate (OMP) to uridine 5'-monophosphate (UMP). The protein is Orotidine 5'-phosphate decarboxylase of Sulfurimonas denitrificans (strain ATCC 33889 / DSM 1251) (Thiomicrospira denitrificans (strain ATCC 33889 / DSM 1251)).